Consider the following 438-residue polypeptide: Chromosomal replication initiator protein DnaA (438 aa).

The tract at residues 1–68 (MKDNILSALK…VVKESLGKDA (68 aa)) is domain I, interacts with DnaA modulators. Positions 68-98 (ATFEIVYKEIDITQENEEKGPLVRKRPLLIT) are domain II. A domain III, AAA+ region region spans residues 99 to 314 (PLNPKYTFEN…GAILKLIAYK (216 aa)). 4 residues coordinate ATP: Gly142, Gly144, Lys145, and Thr146. The domain IV, binds dsDNA stretch occupies residues 315–438 (NLYGSLNLSI…TKNFAQGESI (124 aa)).

Belongs to the DnaA family. In terms of assembly, oligomerizes as a right-handed, spiral filament on DNA at oriC.

It is found in the cytoplasm. Functionally, plays an essential role in the initiation and regulation of chromosomal replication. ATP-DnaA binds to the origin of replication (oriC) to initiate formation of the DNA replication initiation complex once per cell cycle. Binds the DnaA box (a 9 base pair repeat at the origin) and separates the double-stranded (ds)DNA. Forms a right-handed helical filament on oriC DNA; dsDNA binds to the exterior of the filament while single-stranded (ss)DNA is stabiized in the filament's interior. The ATP-DnaA-oriC complex binds and stabilizes one strand of the AT-rich DNA unwinding element (DUE), permitting loading of DNA polymerase. After initiation quickly degrades to an ADP-DnaA complex that is not apt for DNA replication. Binds acidic phospholipids. The protein is Chromosomal replication initiator protein DnaA of Thermosipho africanus (strain TCF52B).